Consider the following 417-residue polypeptide: Probable lysophospholipase BODYGUARD 4 (417 aa).

The N-terminal stretch at 1–49 (MSFPRKFGTAIHAALSFIVFFFLDLLDAILCVVYEFVDEILEENSTGCY) is a signal peptide. The N-palmitoyl cysteine moiety is linked to residue Cys-50. The 110-residue stretch at 150 to 259 (VIFIHGFMGS…PPYFPSSVEG (110 aa)) folds into the AB hydrolase-1 domain. His-154 is an active-site residue. Ser-225 (nucleophile) is an active-site residue. Residues Asp-367 and His-395 each act as charge relay system in the active site.

Expressed in epidermal cells.

It localises to the cell membrane. The protein localises to the secreted. The protein resides in the cell wall. In terms of biological role, involved in cuticle development and morphogenesis. The protein is Probable lysophospholipase BODYGUARD 4 of Arabidopsis thaliana (Mouse-ear cress).